The chain runs to 199 residues: Probable GTP-binding protein EngB (199 aa).

An EngB-type G domain is found at 28–199 (DLPEIALAGR…ESWDTILEYL (172 aa)). GTP-binding positions include 36–43 (GRSNVGKS), 63–67 (GKTQL), 81–84 (DVPG), 148–151 (TKAD), and 180–182 (FSS). Residues serine 43 and threonine 65 each coordinate Mg(2+).

Belongs to the TRAFAC class TrmE-Era-EngA-EngB-Septin-like GTPase superfamily. EngB GTPase family. Mg(2+) is required as a cofactor.

Its function is as follows. Necessary for normal cell division and for the maintenance of normal septation. This Streptococcus equi subsp. equi (strain 4047) protein is Probable GTP-binding protein EngB.